Here is a 206-residue protein sequence, read N- to C-terminus: MIDEAIVQFDKALRTLFAPARSVRPTPGAGVPETHLGDRDRQHVAALMRVNHSGEICAQALYQGQSMSAGDLDVKRELARASDEETEHLAWTEQRISELGGRKSLLNPLWYGGSLALGLLAGRLGDRWSLGFLAETERQVEAHLDGHLEHLPPEDHKSREIIEQMKADEAHHADVALALGAHELPAPFRGAMRLMARVMTATAYRI.

Fe cation-binding residues include Glu55, Glu85, His88, Glu137, Glu169, and His172.

Belongs to the COQ7 family. The cofactor is Fe cation.

The protein resides in the cell membrane. It carries out the reaction a 5-methoxy-2-methyl-3-(all-trans-polyprenyl)benzene-1,4-diol + AH2 + O2 = a 3-demethylubiquinol + A + H2O. Its pathway is cofactor biosynthesis; ubiquinone biosynthesis. Functionally, catalyzes the hydroxylation of 2-nonaprenyl-3-methyl-6-methoxy-1,4-benzoquinol during ubiquinone biosynthesis. This Aromatoleum aromaticum (strain DSM 19018 / LMG 30748 / EbN1) (Azoarcus sp. (strain EbN1)) protein is 3-demethoxyubiquinol 3-hydroxylase.